The primary structure comprises 390 residues: Queuine tRNA-ribosyltransferase (390 aa).

D92 acts as the Proton acceptor in catalysis. Residues 92 to 96 (DSGGF), D146, Q195, and G222 each bind substrate. Residues 253–259 (GVGTPED) are RNA binding. Catalysis depends on D272, which acts as the Nucleophile. The segment at 277-281 (TRNAR) is RNA binding; important for wobble base 34 recognition. C310, C312, C315, and H354 together coordinate Zn(2+).

Belongs to the queuine tRNA-ribosyltransferase family. In terms of assembly, homodimer. Within each dimer, one monomer is responsible for RNA recognition and catalysis, while the other monomer binds to the replacement base PreQ1. Zn(2+) is required as a cofactor.

It catalyses the reaction 7-aminomethyl-7-carbaguanine + guanosine(34) in tRNA = 7-aminomethyl-7-carbaguanosine(34) in tRNA + guanine. Its pathway is tRNA modification; tRNA-queuosine biosynthesis. Functionally, catalyzes the base-exchange of a guanine (G) residue with the queuine precursor 7-aminomethyl-7-deazaguanine (PreQ1) at position 34 (anticodon wobble position) in tRNAs with GU(N) anticodons (tRNA-Asp, -Asn, -His and -Tyr). Catalysis occurs through a double-displacement mechanism. The nucleophile active site attacks the C1' of nucleotide 34 to detach the guanine base from the RNA, forming a covalent enzyme-RNA intermediate. The proton acceptor active site deprotonates the incoming PreQ1, allowing a nucleophilic attack on the C1' of the ribose to form the product. After dissociation, two additional enzymatic reactions on the tRNA convert PreQ1 to queuine (Q), resulting in the hypermodified nucleoside queuosine (7-(((4,5-cis-dihydroxy-2-cyclopenten-1-yl)amino)methyl)-7-deazaguanosine). This Acidovorax sp. (strain JS42) protein is Queuine tRNA-ribosyltransferase.